The chain runs to 368 residues: Dihydroorotate dehydrogenase (quinone) (368 aa).

FMN contacts are provided by residues 67–71 and threonine 91; that span reads AGFDK. Lysine 71 contacts substrate. A substrate-binding site is contributed by 116-120; the sequence is NRMGF. FMN is bound by residues asparagine 146 and asparagine 179. Asparagine 179 lines the substrate pocket. Serine 182 (nucleophile) is an active-site residue. A substrate-binding site is contributed by asparagine 184. FMN is bound by residues lysine 222 and threonine 250. 251–252 lines the substrate pocket; the sequence is NT. Residues glycine 276, glycine 305, and 326-327 contribute to the FMN site; that span reads YS.

Belongs to the dihydroorotate dehydrogenase family. Type 2 subfamily. Monomer. FMN is required as a cofactor.

It is found in the cell membrane. It catalyses the reaction (S)-dihydroorotate + a quinone = orotate + a quinol. It participates in pyrimidine metabolism; UMP biosynthesis via de novo pathway; orotate from (S)-dihydroorotate (quinone route): step 1/1. Catalyzes the conversion of dihydroorotate to orotate with quinone as electron acceptor. This chain is Dihydroorotate dehydrogenase (quinone), found in Streptomyces avermitilis (strain ATCC 31267 / DSM 46492 / JCM 5070 / NBRC 14893 / NCIMB 12804 / NRRL 8165 / MA-4680).